A 49-amino-acid chain; its full sequence is Large ribosomal subunit protein bL33A (49 aa).

This sequence belongs to the bacterial ribosomal protein bL33 family.

This chain is Large ribosomal subunit protein bL33A, found in Limosilactobacillus reuteri subsp. reuteri (strain JCM 1112) (Lactobacillus reuteri).